We begin with the raw amino-acid sequence, 218 residues long: Small ribosomal subunit protein uS3c (218 aa).

Residues 43-118 (IKNYVQKNPR…RLNIAIARIS (76 aa)) enclose the KH type-2 domain.

It belongs to the universal ribosomal protein uS3 family. As to quaternary structure, part of the 30S ribosomal subunit.

It localises to the plastid. The protein localises to the chloroplast. In Acorus calamus (Sweet flag), this protein is Small ribosomal subunit protein uS3c (rps3).